We begin with the raw amino-acid sequence, 265 residues long: HTH-type transcriptional activator CfaD (265 aa).

An HTH araC/xylS-type domain is found at 164 to 261 (DKVRNVIEKD…GVTPKQFFTY (98 aa)). 2 DNA-binding regions (H-T-H motif) span residues 181–202 (GIIA…ESEN) and 228–251 (ISQI…NKHY).

As to quaternary structure, homodimer.

Its function is as follows. Transcriptional activator of the CFA/I adhesin (cfaA and cfaB) genes of enterotoxigenic E.coli at 37 degrees Celsius. Also represses the silencing effect of H-NS (hns). In Escherichia coli, this protein is HTH-type transcriptional activator CfaD.